Here is a 90-residue protein sequence, read N- to C-terminus: Probable Fe(2+)-trafficking protein (90 aa).

The protein belongs to the Fe(2+)-trafficking protein family. As to quaternary structure, monomer.

Could be a mediator in iron transactions between iron acquisition and iron-requiring processes, such as synthesis and/or repair of Fe-S clusters in biosynthetic enzymes. The polypeptide is Probable Fe(2+)-trafficking protein (Proteus mirabilis (strain HI4320)).